We begin with the raw amino-acid sequence, 129 residues long: Histone H2A-III (129 aa).

This sequence belongs to the histone H2A family. The nucleosome is a histone octamer containing two molecules each of H2A, H2B, H3 and H4 assembled in one H3-H4 heterotetramer and two H2A-H2B heterodimers. The octamer wraps approximately 147 bp of DNA.

The protein resides in the nucleus. It localises to the chromosome. Its function is as follows. Core component of nucleosome. Nucleosomes wrap and compact DNA into chromatin, limiting DNA accessibility to the cellular machineries which require DNA as a template. Histones thereby play a central role in transcription regulation, DNA repair, DNA replication and chromosomal stability. DNA accessibility is regulated via a complex set of post-translational modifications of histones, also called histone code, and nucleosome remodeling. The polypeptide is Histone H2A-III (Volvox carteri (Green alga)).